Reading from the N-terminus, the 1219-residue chain is Cullin-associated NEDD8-dissociated protein 1 (1219 aa).

At A2 the chain carries N-acetylalanine. 18 HEAT repeats span residues 44–81 (DLEVRLSSIILQQLDDVAGDVSGLAVKCLAPLVKKVGE), 83–119 (RIVEMTNKLCDKLLHGKDQHRDTASIALRTVVAQIAP), 209–244 (KATVEVVKNLSNRNAKSEITRTNIQMIGALCRAVGY), 248–288 (THLG…RCPR), 327–363 (EEDDESANEYTDDEDASWKVRRAAAKCLAGLIVSRSE), 367–404 (KVYQEACPKLIDRFKEREENVKMDVFNTFIDLLRQTGN), 423–460 (QEVSKIVKSINRQLREKSVKTKVGAFSVLRELVVVLPD), 464–503 (DHIGSLVPGIERALNDKSSTSNLKIEALVFTKLVLASHAP), 599–636 (AELPSCLPVLVDRMGNEITRLTAVKAFSVIATSPLHIN), 639–676 (CVLDHLIAELTGFLRKANRVLRQATLITMNTLVTAYGD), 808–848 (KNCS…RKDL), 850–883 (AHAGIETIVIESFQSPFEEIKSAASYALGNIAVG), 927–964 (SSVEKILALLFNHCESEEEGVRNVVAECLGKMALIEPE), 966–998 (LVPALQVRTTSPAAFTRATVVTAVKYSVVERPE), 1002–1039 (EIIFPQISSFLMLIKDGDRHVRRAAVSALSTFAHYKPN), 1043–1079 (GLLPELLPLLYDQTVIKKELIRTVDLGPFKHVVDDGL), 1101–1137 (NPSSFIVPFLKSGLEDHYDLKMLCHLILSLLADKCPS), and 1141–1180 (AVLDSLVEPLHKTISFKPKQDAVKQEHDRNEDMIRSALRA). The interval 311 to 340 (FTDNMEEDTDNETLEDEEDDESANEYTDDE) is disordered. Acidic residues predominate over residues 314 to 340 (NMEEDTDNETLEDEEDDESANEYTDDE).

The protein belongs to the CAND family. Interacts with CUL1 and CUL4. Binds unneddylated CUL1, but cannot bind CUL1 once it has been neddylated. In terms of tissue distribution, highly expressed in roots. Expressed in stems, flowers and siliques.

In terms of biological role, key assembly factor of SCF (SKP1-CUL1-F-box protein) E3 ubiquitin ligase complexes that promotes the exchange of the substrate-recognition F-box subunit in SCF complexes, thereby playing a key role in the cellular repertoire of SCF complexes. Acts as a F-box protein exchange factor. Required for SCF(TIR1) function. Modulates SCF(TIR1) function through its interactions with the CUL1 subunit. Represses photomorphogenesis by promoting HY5 degradation in darkness. This is Cullin-associated NEDD8-dissociated protein 1 (CAND1) from Arabidopsis thaliana (Mouse-ear cress).